The primary structure comprises 206 residues: Ribosome maturation factor RimP (206 aa).

This sequence belongs to the RimP family.

It is found in the cytoplasm. Required for maturation of 30S ribosomal subunits. This is Ribosome maturation factor RimP from Paracoccus denitrificans (strain Pd 1222).